Here is a 574-residue protein sequence, read N- to C-terminus: Meiotically up-regulated gene 72 protein (574 aa).

A disordered region spans residues 339-374 (VRAGTPQSSPNFNPAMRRSPVGAASRSPSRSTIGIS). Threonine 343 carries the phosphothreonine modification. The span at 364-374 (RSPSRSTIGIS) shows a compositional bias: polar residues. Serine 392 bears the Phosphoserine mark. Disordered regions lie at residues 422 to 451 (TSPS…NKAG) and 495 to 574 (RNRR…RRMD). Polar residues predominate over residues 541–554 (LYDTSRYPTRNSKP).

It localises to the cytoplasm. Has a role in meiosis. The polypeptide is Meiotically up-regulated gene 72 protein (mug72) (Schizosaccharomyces pombe (strain 972 / ATCC 24843) (Fission yeast)).